Here is a 1081-residue protein sequence, read N- to C-terminus: Disheveled-associated activator of morphogenesis 1-A (1081 aa).

In terms of domain architecture, GBD/FH3 spans 45 to 418 (LPVPPVEELD…QIVIQNEKGQ (374 aa)). Disordered stretches follow at residues 455–476 (KEHN…AKTQ) and 519–615 (RTVC…PLKS). The span at 526-536 (PGGPPPPPGAP) shows a compositional bias: pro residues. Residues 538–547 (GPMSMPSGNF) show a composition bias toward low complexity. Residues 548–585 (MPPPPPPPPPFPGGMAPPPPPPPPPPPPPGGPPPPPGL) are compositionally biased toward pro residues. Residues 586–600 (PLLGAAPPGAPLGLS) are compositionally biased toward low complexity. Positions 603 to 1012 (KKNIPQPKNP…EERRIRMEAQ (410 aa)) constitute an FH2 domain. Residues 696–705 (AQNCNILLSR) are actin-binding. The segment covering 1013-1029 (LKEQRERERKARKAKEN) has biased composition (basic and acidic residues). Disordered stretches follow at residues 1013–1038 (LKEQ…EFDD) and 1060–1081 (RKRI…KLNY). Residues 1030 to 1061 (GEEEGEFDDLVSALRSGEVFDKDLSKLKRNRK) form the DAD domain. Basic and acidic residues predominate over residues 1070–1081 (SSRERPVTKLNY).

The protein resides in the cytoplasm. Its subcellular location is the cytoskeleton. It localises to the cilium basal body. Its function is as follows. Binds to disheveled (dsh) and Rho, and mediates Wnt-induced dsh-Rho complex formation during gastrulation. May play a role as a scaffolding protein to recruit Rho-GDP and Rho-GEF, thereby enhancing Rho-GTP formation. Can direct nucleation and elongation of new actin filaments. Involved in building functional cilia. Involved in building functional cilia. Involved in the organization of the subapical actin network in multiciliated epithelial cells. This chain is Disheveled-associated activator of morphogenesis 1-A (daam1-a), found in Xenopus laevis (African clawed frog).